A 143-amino-acid chain; its full sequence is Large ribosomal subunit protein uL13 (143 aa).

The protein belongs to the universal ribosomal protein uL13 family. In terms of assembly, part of the 50S ribosomal subunit.

This protein is one of the early assembly proteins of the 50S ribosomal subunit, although it is not seen to bind rRNA by itself. It is important during the early stages of 50S assembly. The sequence is that of Large ribosomal subunit protein uL13 from Desulfitobacterium hafniense (strain DSM 10664 / DCB-2).